We begin with the raw amino-acid sequence, 349 residues long: MPQQWLPPIYWDGDAVAILDQRLLPQREAVIRCTSPKQVVAAIKNMAIRGAPAVGVAGAMALALGAVLIQAADARTFKSKFARLCRQVRTARPTGRNLGWAVDRIHALVEGNRDADVPRLHELIRREADLILAEDVAGNVAIGSWGKTVIPRGAGIMTYCNAGALATADYGTAVGVIRAAFDADPGIRVFSCETRPFLQGARLTVYELMKAGIPVTLITDNSIGSLMSRGMIDVVVVGADRIAANGDTANKIGTYMAAVLACTHGIPFYVAAPRSTIDASLPDGDGIPIEQRAPKEVTHFNGRRVAPQGAAALNAAFDVTPNKYITGIITEVGILSKPFGRAIRQALKA.

Substrate is bound by residues 49 to 51 (RGA), Arg92, and Gln199. Asp240 (proton donor) is an active-site residue. 250-251 (NK) lines the substrate pocket.

Belongs to the eIF-2B alpha/beta/delta subunits family. MtnA subfamily.

The catalysed reaction is 5-(methylsulfanyl)-alpha-D-ribose 1-phosphate = 5-(methylsulfanyl)-D-ribulose 1-phosphate. It functions in the pathway amino-acid biosynthesis; L-methionine biosynthesis via salvage pathway; L-methionine from S-methyl-5-thio-alpha-D-ribose 1-phosphate: step 1/6. In terms of biological role, catalyzes the interconversion of methylthioribose-1-phosphate (MTR-1-P) into methylthioribulose-1-phosphate (MTRu-1-P). The sequence is that of Methylthioribose-1-phosphate isomerase from Syntrophobacter fumaroxidans (strain DSM 10017 / MPOB).